Here is a 296-residue protein sequence, read N- to C-terminus: Inactive uridine phosphorylase B (296 aa).

It belongs to the PNP/UDP phosphorylase family. In terms of assembly, homodimer.

The sequence is that of Inactive uridine phosphorylase B from Schistosoma mansoni (Blood fluke).